The following is a 595-amino-acid chain: Chaperone protein HscA homolog (595 aa).

It belongs to the heat shock protein 70 family.

Its function is as follows. Chaperone involved in the maturation of iron-sulfur cluster-containing proteins. Has a low intrinsic ATPase activity which is markedly stimulated by HscB. This is Chaperone protein HscA homolog from Rickettsia peacockii (strain Rustic).